The following is a 446-amino-acid chain: C4-dicarboxylate transport protein (446 aa).

9 consecutive transmembrane segments (helical) span residues 20 to 40 (HLYV…HFYP), 56 to 76 (LVKM…IAGM), 91 to 111 (IYFL…ANVV), 160 to 180 (GDIL…AGVG), 200 to 220 (LVHI…AFTI), 233 to 253 (FLIL…LGLV), 319 to 339 (IYMT…LSLG), 344 to 364 (LLLV…AGFI), and 367 to 387 (AATL…ILGI).

This sequence belongs to the dicarboxylate/amino acid:cation symporter (DAACS) (TC 2.A.23) family.

The protein resides in the cell inner membrane. In terms of biological role, responsible for the transport of dicarboxylates such as succinate, fumarate, and malate from the periplasm across the membrane. The polypeptide is C4-dicarboxylate transport protein (Azorhizobium caulinodans (strain ATCC 43989 / DSM 5975 / JCM 20966 / LMG 6465 / NBRC 14845 / NCIMB 13405 / ORS 571)).